The following is a 127-amino-acid chain: uncharacterized protein (127 aa).

Positions 1-46 constitute an HTH asnC-type domain; that stretch reads MEVGLSPSACLRRIKLMEQAGVIRGYTALVDPTQSESTIAVIINIT.

Functionally, not known, symbiotically active. This is an uncharacterized protein from Sinorhizobium fredii (strain NBRC 101917 / NGR234).